Reading from the N-terminus, the 122-residue chain is Small ribosomal subunit protein uS13 (122 aa).

The tract at residues 95-122 (GLPVRGQRTHTNARTRKGPAKPIAGKKK) is disordered.

This sequence belongs to the universal ribosomal protein uS13 family. As to quaternary structure, part of the 30S ribosomal subunit. Forms a loose heterodimer with protein S19. Forms two bridges to the 50S subunit in the 70S ribosome.

Its function is as follows. Located at the top of the head of the 30S subunit, it contacts several helices of the 16S rRNA. In the 70S ribosome it contacts the 23S rRNA (bridge B1a) and protein L5 of the 50S subunit (bridge B1b), connecting the 2 subunits; these bridges are implicated in subunit movement. Contacts the tRNAs in the A and P-sites. The protein is Small ribosomal subunit protein uS13 of Xanthobacter autotrophicus (strain ATCC BAA-1158 / Py2).